Consider the following 146-residue polypeptide: Deoxyuridine 5'-triphosphate nucleotidohydrolase (146 aa).

Residues 60-62 (RSG), Asn73, and 77-79 (VID) contribute to the substrate site.

The protein belongs to the dUTPase family. The cofactor is Mg(2+).

It catalyses the reaction dUTP + H2O = dUMP + diphosphate + H(+). Its pathway is pyrimidine metabolism; dUMP biosynthesis; dUMP from dCTP (dUTP route): step 2/2. This enzyme is involved in nucleotide metabolism: it produces dUMP, the immediate precursor of thymidine nucleotides and it decreases the intracellular concentration of dUTP so that uracil cannot be incorporated into DNA. The polypeptide is Deoxyuridine 5'-triphosphate nucleotidohydrolase (Tropheryma whipplei (strain TW08/27) (Whipple's bacillus)).